Reading from the N-terminus, the 445-residue chain is Exodeoxyribonuclease 7 large subunit (445 aa).

Belongs to the XseA family. In terms of assembly, heterooligomer composed of large and small subunits.

The protein resides in the cytoplasm. It catalyses the reaction Exonucleolytic cleavage in either 5'- to 3'- or 3'- to 5'-direction to yield nucleoside 5'-phosphates.. Functionally, bidirectionally degrades single-stranded DNA into large acid-insoluble oligonucleotides, which are then degraded further into small acid-soluble oligonucleotides. The polypeptide is Exodeoxyribonuclease 7 large subunit (Staphylococcus aureus (strain bovine RF122 / ET3-1)).